Reading from the N-terminus, the 382-residue chain is Protein PEP-RELATED DEVELOPMENT ARRESTED 1 homolog, chloroplastic (382 aa).

The N-terminal 44 residues, 1–44 (MAILPLSISHSLTSALSATSSGIGRPVARLLHPRVPSRPTVICL), are a transit peptide targeting the chloroplast.

It is found in the plastid. The protein localises to the chloroplast stroma. Its subcellular location is the chloroplast nucleoid. Its function is as follows. Plays an essential role in early steps of chloroplast development. May be involved in the redox control of plastid gene expression by maintening the redox state around chloroplast nucleoids. May positively regulate plastid-encoded RNA polymerase (PEP) activity. The polypeptide is Protein PEP-RELATED DEVELOPMENT ARRESTED 1 homolog, chloroplastic (Oryza sativa subsp. japonica (Rice)).